Reading from the N-terminus, the 82-residue chain is Sigma-G-dependent sporulation-specific SASP protein (82 aa).

This is Sigma-G-dependent sporulation-specific SASP protein from Bacillus subtilis (strain 168).